We begin with the raw amino-acid sequence, 269 residues long: 4-hydroxy-tetrahydrodipicolinate reductase (269 aa).

Residues 10-15 (GANGRM), Glu36, 99-101 (GTT), and 123-126 (AANF) contribute to the NAD(+) site. Catalysis depends on His156, which acts as the Proton donor/acceptor. (S)-2,3,4,5-tetrahydrodipicolinate is bound at residue His157. Catalysis depends on Lys160, which acts as the Proton donor. 166–167 (GT) lines the (S)-2,3,4,5-tetrahydrodipicolinate pocket.

The protein belongs to the DapB family.

It is found in the cytoplasm. The enzyme catalyses (S)-2,3,4,5-tetrahydrodipicolinate + NAD(+) + H2O = (2S,4S)-4-hydroxy-2,3,4,5-tetrahydrodipicolinate + NADH + H(+). It carries out the reaction (S)-2,3,4,5-tetrahydrodipicolinate + NADP(+) + H2O = (2S,4S)-4-hydroxy-2,3,4,5-tetrahydrodipicolinate + NADPH + H(+). It functions in the pathway amino-acid biosynthesis; L-lysine biosynthesis via DAP pathway; (S)-tetrahydrodipicolinate from L-aspartate: step 4/4. Catalyzes the conversion of 4-hydroxy-tetrahydrodipicolinate (HTPA) to tetrahydrodipicolinate. The chain is 4-hydroxy-tetrahydrodipicolinate reductase from Neisseria meningitidis serogroup A / serotype 4A (strain DSM 15465 / Z2491).